A 180-amino-acid chain; its full sequence is ATP synthase subunit delta (180 aa).

This sequence belongs to the ATPase delta chain family. F-type ATPases have 2 components, F(1) - the catalytic core - and F(0) - the membrane proton channel. F(1) has five subunits: alpha(3), beta(3), gamma(1), delta(1), epsilon(1). F(0) has three main subunits: a(1), b(2) and c(10-14). The alpha and beta chains form an alternating ring which encloses part of the gamma chain. F(1) is attached to F(0) by a central stalk formed by the gamma and epsilon chains, while a peripheral stalk is formed by the delta and b chains.

Its subcellular location is the cell inner membrane. In terms of biological role, f(1)F(0) ATP synthase produces ATP from ADP in the presence of a proton or sodium gradient. F-type ATPases consist of two structural domains, F(1) containing the extramembraneous catalytic core and F(0) containing the membrane proton channel, linked together by a central stalk and a peripheral stalk. During catalysis, ATP synthesis in the catalytic domain of F(1) is coupled via a rotary mechanism of the central stalk subunits to proton translocation. Functionally, this protein is part of the stalk that links CF(0) to CF(1). It either transmits conformational changes from CF(0) to CF(1) or is implicated in proton conduction. The polypeptide is ATP synthase subunit delta (Pelobacter propionicus (strain DSM 2379 / NBRC 103807 / OttBd1)).